The following is a 316-amino-acid chain: Pseudouridine-5'-phosphate glycosidase (316 aa).

Residue Glu-31 is the Proton donor of the active site. Positions 92 and 112 each coordinate substrate. Asp-144 serves as a coordination point for Mn(2+). A substrate-binding site is contributed by 146-148 (SAD). Catalysis depends on Lys-165, which acts as the Nucleophile.

The protein belongs to the pseudouridine-5'-phosphate glycosidase family. As to quaternary structure, homotrimer. Mn(2+) serves as cofactor.

The catalysed reaction is D-ribose 5-phosphate + uracil = psi-UMP + H2O. Functionally, catalyzes the reversible cleavage of pseudouridine 5'-phosphate (PsiMP) to ribose 5-phosphate and uracil. Functions biologically in the cleavage direction, as part of a pseudouridine degradation pathway. Part of an operon that could be involved in the biosynthesis of the blue pigment indigoidine, which is implicated in pathogenicity and protection from oxidative stress. The polypeptide is Pseudouridine-5'-phosphate glycosidase (Dickeya dadantii (strain 3937) (Erwinia chrysanthemi (strain 3937))).